A 552-amino-acid chain; its full sequence is Beta-hexosaminidase A (552 aa).

The first 15 residues, 1-15, serve as a signal peptide directing secretion; that stretch reads MRLIVLSLLFTSTLA. A glycan (N-linked (GlcNAc...) asparagine) is linked at Asn44. The Proton donor role is filled by Glu322. 3 N-linked (GlcNAc...) asparagine glycosylation sites follow: Asn348, Asn409, and Asn457.

Belongs to the glycosyl hydrolase 20 family.

It is found in the lysosome. It catalyses the reaction Hydrolysis of terminal non-reducing N-acetyl-D-hexosamine residues in N-acetyl-beta-D-hexosaminides.. Responsible for the degradation of GM2 gangliosides, and a variety of other molecules containing terminal N-acetyl hexosamines. Degrades chitotriose. This chain is Beta-hexosaminidase A, found in Caenorhabditis briggsae.